Consider the following 242-residue polypeptide: Triosephosphate isomerase (242 aa).

8–10 (NWK) is a substrate binding site. Residue His98 is the Electrophile of the active site. Glu167 (proton acceptor) is an active-site residue. Substrate contacts are provided by residues Gly173, Ser205, and 226 to 227 (GG).

It belongs to the triosephosphate isomerase family. In terms of assembly, homodimer.

It localises to the cytoplasm. It catalyses the reaction D-glyceraldehyde 3-phosphate = dihydroxyacetone phosphate. It participates in carbohydrate biosynthesis; gluconeogenesis. Its pathway is carbohydrate degradation; glycolysis; D-glyceraldehyde 3-phosphate from glycerone phosphate: step 1/1. In terms of biological role, involved in the gluconeogenesis. Catalyzes stereospecifically the conversion of dihydroxyacetone phosphate (DHAP) to D-glyceraldehyde-3-phosphate (G3P). The protein is Triosephosphate isomerase of Mesomycoplasma hyopneumoniae (strain 232) (Mycoplasma hyopneumoniae).